A 422-amino-acid chain; its full sequence is Putative nickel insertion protein (422 aa).

The protein belongs to the LarC family.

The polypeptide is Putative nickel insertion protein (Synechocystis sp. (strain ATCC 27184 / PCC 6803 / Kazusa)).